Reading from the N-terminus, the 89-residue chain is Small ribosomal subunit protein uS15 (89 aa).

This sequence belongs to the universal ribosomal protein uS15 family. In terms of assembly, part of the 30S ribosomal subunit. Forms a bridge to the 50S subunit in the 70S ribosome, contacting the 23S rRNA.

One of the primary rRNA binding proteins, it binds directly to 16S rRNA where it helps nucleate assembly of the platform of the 30S subunit by binding and bridging several RNA helices of the 16S rRNA. Functionally, forms an intersubunit bridge (bridge B4) with the 23S rRNA of the 50S subunit in the ribosome. The chain is Small ribosomal subunit protein uS15 from Pseudarthrobacter chlorophenolicus (strain ATCC 700700 / DSM 12829 / CIP 107037 / JCM 12360 / KCTC 9906 / NCIMB 13794 / A6) (Arthrobacter chlorophenolicus).